Reading from the N-terminus, the 709-residue chain is Septu protein PtuA (709 aa).

Component of antiviral defense system Septu type II, composed of PtuA and PtuB. Expression of Septu type II in B.subtilis (strain BEST7003) confers resistance to phages SBSphiC and SpBeta. May be an ATPase. In Bacillus mycoides (strain KBAB4) (Bacillus weihenstephanensis), this protein is Septu protein PtuA.